Reading from the N-terminus, the 190-residue chain is Peptidyl-tRNA hydrolase (190 aa).

Position 14 (Tyr14) interacts with tRNA. The active-site Proton acceptor is His19. Positions 64, 66, and 112 each coordinate tRNA.

This sequence belongs to the PTH family. Monomer.

Its subcellular location is the cytoplasm. The catalysed reaction is an N-acyl-L-alpha-aminoacyl-tRNA + H2O = an N-acyl-L-amino acid + a tRNA + H(+). In terms of biological role, hydrolyzes ribosome-free peptidyl-tRNAs (with 1 or more amino acids incorporated), which drop off the ribosome during protein synthesis, or as a result of ribosome stalling. Its function is as follows. Catalyzes the release of premature peptidyl moieties from peptidyl-tRNA molecules trapped in stalled 50S ribosomal subunits, and thus maintains levels of free tRNAs and 50S ribosomes. The polypeptide is Peptidyl-tRNA hydrolase (Chlorobium phaeobacteroides (strain DSM 266 / SMG 266 / 2430)).